The chain runs to 102 residues: PqqA binding protein (102 aa).

The protein belongs to the PqqD family. In terms of assembly, monomer. Interacts with PqqE.

It participates in cofactor biosynthesis; pyrroloquinoline quinone biosynthesis. Its function is as follows. Functions as a PqqA binding protein and presents PqqA to PqqE, in the pyrroloquinoline quinone (PQQ) biosynthetic pathway. The protein is PqqA binding protein of Rhodopseudomonas palustris (strain ATCC BAA-98 / CGA009).